Consider the following 160-residue polypeptide: MGVTKKPDLNDPVLRAKLAKGMGHNYYGEPAWPNDLLYIFPVVILGTIACNVGLAVLEPSMIGEPADPFATPLEILPEWYFFPVFQILRTVPNKLLGVLLMVSVPTGLLTVPFLENVNKFQNPFRRPVATTVFLIGTVVALWLGIGATLPIDKSLTLGLF.

The next 3 membrane-spanning stretches (helical) occupy residues 36–56 (LLYI…GLAV), 95–115 (LLGV…PFLE), and 131–151 (TVFL…TLPI).

The protein belongs to the cytochrome b family. PetD subfamily. As to quaternary structure, the 4 large subunits of the cytochrome b6-f complex are cytochrome b6, subunit IV (17 kDa polypeptide, petD), cytochrome f and the Rieske protein, while the 4 small subunits are petG, petL, petM and petN. The complex functions as a dimer.

The protein localises to the plastid. It is found in the chloroplast thylakoid membrane. Functionally, component of the cytochrome b6-f complex, which mediates electron transfer between photosystem II (PSII) and photosystem I (PSI), cyclic electron flow around PSI, and state transitions. The sequence is that of Cytochrome b6-f complex subunit 4 from Sorghum bicolor (Sorghum).